Reading from the N-terminus, the 283-residue chain is 4-diphosphocytidyl-2-C-methyl-D-erythritol kinase (283 aa).

The active site involves K10. 99–109 (PMGGGLGGGSS) serves as a coordination point for ATP. The active site involves D141.

The protein belongs to the GHMP kinase family. IspE subfamily. Homodimer.

It carries out the reaction 4-CDP-2-C-methyl-D-erythritol + ATP = 4-CDP-2-C-methyl-D-erythritol 2-phosphate + ADP + H(+). Its pathway is isoprenoid biosynthesis; isopentenyl diphosphate biosynthesis via DXP pathway; isopentenyl diphosphate from 1-deoxy-D-xylulose 5-phosphate: step 3/6. Functionally, catalyzes the phosphorylation of the position 2 hydroxy group of 4-diphosphocytidyl-2C-methyl-D-erythritol. The chain is 4-diphosphocytidyl-2-C-methyl-D-erythritol kinase from Salmonella arizonae (strain ATCC BAA-731 / CDC346-86 / RSK2980).